We begin with the raw amino-acid sequence, 535 residues long: BAR/IMD domain-containing adapter protein 2 (535 aa).

Residues 1-250 (MSLSRSEEMH…VQLMQQMANS (250 aa)) enclose the IMD domain. Positions 88-153 (NQLEETLKSF…LRKKSQGSKN (66 aa)) form a coiled coil. Ser-262, Ser-324, Ser-326, and Ser-337 each carry phosphoserine. The segment at 299–370 (VMNGVAGPDS…TLPRSSSMAA (72 aa)) is disordered. Residues 321–335 (QPKSLSPPQSQSKLS) show a composition bias toward low complexity. Thr-341 bears the Phosphothreonine mark. At Ser-347 the chain carries Phosphoserine. A compositionally biased stretch (polar residues) spans 349–368 (TPKNSYATTENKTLPRSSSM). Thr-361 is subject to Phosphothreonine. 4 positions are modified to phosphoserine: Ser-367, Ser-385, Ser-396, and Ser-455. The SH3 domain maps to 375 to 438 (NGRMRVKAIF…PFSYTRVLDS (64 aa)). Residues 445–477 (HMSLQQGKSSSTGNLLDKDDLALPPPDYGTSSR) form a disordered region. Polar residues predominate over residues 447–458 (SLQQGKSSSTGN).

Homodimer. Interacts with CDC42 and RAC1 that have been activated by GTP binding. Binds DIAPH1. Interacts with ATN1, ADGRB1, SHANK1, SHANK2, SHANK3, TIAM1, WASF1 and WASF2. Interacts with ENAH after recruitment of CDC42. Interacts with EPS8. Phosphorylated on tyrosine residues by INSR in response to insulin treatment. Detected in liver, brain, olfactory bulb, brain cortex, caudate putamen, hypothalamus and cerebellum.

The protein resides in the cytoplasm. It is found in the membrane. Its subcellular location is the cell projection. The protein localises to the filopodium. It localises to the ruffle. The protein resides in the cytoskeleton. Adapter protein that links membrane-bound small G-proteins to cytoplasmic effector proteins. Necessary for CDC42-mediated reorganization of the actin cytoskeleton and for RAC1-mediated membrane ruffling. Involved in the regulation of the actin cytoskeleton by WASF family members and the Arp2/3 complex. Plays a role in neurite growth. Acts syngeristically with ENAH to promote filipodia formation. Plays a role in the reorganization of the actin cytoskeleton in response to bacterial infection. Participates in actin bundling when associated with EPS8, promoting filopodial protrusions. The protein is BAR/IMD domain-containing adapter protein 2 (Baiap2) of Mus musculus (Mouse).